The sequence spans 254 residues: MKKQVFASKKVGVLPARWGSARFTGKPLASILGKSLIRRTYENINQSIALDKVIVATDDQRIMDHVLDFGGDCVLTSPECANGTERTAETISRYFPEAEIIVNIQGDEPCLQHTVVDALVRKLEEFPEIQIVTPVAKTTDSHEILTNQKVKCVFDKNGKALYFSRSPIPHILKKETPIYLHIGVYAFRRNALFNYIESSPTPLSQAEDLEQLRILEHGGSIHVCVVEAKSPSVDYPEDINKVEKYLTCHSSASF.

It belongs to the KdsB family.

The protein resides in the cytoplasm. It carries out the reaction 3-deoxy-alpha-D-manno-oct-2-ulosonate + CTP = CMP-3-deoxy-beta-D-manno-octulosonate + diphosphate. The protein operates within nucleotide-sugar biosynthesis; CMP-3-deoxy-D-manno-octulosonate biosynthesis; CMP-3-deoxy-D-manno-octulosonate from 3-deoxy-D-manno-octulosonate and CTP: step 1/1. Its pathway is bacterial outer membrane biogenesis; lipopolysaccharide biosynthesis. Activates KDO (a required 8-carbon sugar) for incorporation into bacterial lipopolysaccharide in Gram-negative bacteria. The polypeptide is 3-deoxy-manno-octulosonate cytidylyltransferase (Chlamydia caviae (strain ATCC VR-813 / DSM 19441 / 03DC25 / GPIC) (Chlamydophila caviae)).